Consider the following 315-residue polypeptide: Transaldolase (315 aa).

K128 serves as the catalytic Schiff-base intermediate with substrate.

This sequence belongs to the transaldolase family. Type 1 subfamily. As to quaternary structure, homodimer.

The protein localises to the cytoplasm. It carries out the reaction D-sedoheptulose 7-phosphate + D-glyceraldehyde 3-phosphate = D-erythrose 4-phosphate + beta-D-fructose 6-phosphate. It participates in carbohydrate degradation; pentose phosphate pathway; D-glyceraldehyde 3-phosphate and beta-D-fructose 6-phosphate from D-ribose 5-phosphate and D-xylulose 5-phosphate (non-oxidative stage): step 2/3. Its function is as follows. Transaldolase is important for the balance of metabolites in the pentose-phosphate pathway. The protein is Transaldolase of Opitutus terrae (strain DSM 11246 / JCM 15787 / PB90-1).